The following is a 468-amino-acid chain: Glutamate--tRNA ligase 2 (468 aa).

The 'HIGH' region motif lies at 9 to 19 (PSPTGSLHLGG). The 'KMSKS' region signature appears at 238 to 242 (KLSKR). Residue lysine 241 coordinates ATP.

This sequence belongs to the class-I aminoacyl-tRNA synthetase family. Glutamate--tRNA ligase type 1 subfamily. Monomer.

Its subcellular location is the cytoplasm. The enzyme catalyses tRNA(Glu) + L-glutamate + ATP = L-glutamyl-tRNA(Glu) + AMP + diphosphate. Catalyzes the attachment of glutamate to tRNA(Glu) in a two-step reaction: glutamate is first activated by ATP to form Glu-AMP and then transferred to the acceptor end of tRNA(Glu). This is Glutamate--tRNA ligase 2 from Anaplasma phagocytophilum (strain HZ).